The following is a 1099-amino-acid chain: Solute carrier family 38 member 10 (1099 aa).

Helical transmembrane passes span 9-31, 36-58, 84-104, 123-143, 153-173, 229-249, 272-292, 323-343, 345-365, and 378-398; these read WGLV…PFCF, IVLG…MFLV, LVET…YVVI, TFRV…LSLQ, FSAM…LSSF, IFAS…FFGY, MIRV…ILPC, VLTL…PNVE, ILGF…PALI, and VVLW…LSVS. Disordered regions lie at residues 440–679 and 720–1047; these read DSQE…EEAG and EIRQ…LAPK. Residue serine 441 is modified to Phosphoserine. Composition is skewed to basic and acidic residues over residues 441–454, 493–508, 517–528, 544–561, and 586–599; these read SQEK…KEVL, EAHR…KVVV, PEEKKPPPKLPD, ESEK…KRPE, and PRKE…RDLH. A phosphoserine mark is found at serine 607 and serine 635. Basic and acidic residues-rich tracts occupy residues 653-663, 720-735, and 749-766; these read EAAEQREKNEA, EIRQ…KPKP, and GQEE…HAGE. A coiled-coil region spans residues 698–734; the sequence is VQQKRLLDQQEKLLAVIEEQHKEIRQQRQEGEEDKPK. The residue at position 767 (threonine 767) is a Phosphothreonine. Composition is skewed to basic and acidic residues over residues 793 to 802, 852 to 894, 917 to 928, 957 to 969, and 1010 to 1022; these read KGQHPLEEVK, EPVH…ETGK, EDSHSKSRHSEP, KSQD…RSEG, and QKPE…RDLK. Serine 886 bears the Phosphoserine mark.

It belongs to the amino acid/polyamine transporter 2 family. As to expression, only expressed in the pituitary, adrenal gland, stomach and in the upper gastrointestinal tract.

Its subcellular location is the membrane. It catalyses the reaction L-glutamate(out) = L-glutamate(in). It carries out the reaction L-glutamine(out) = L-glutamine(in). The catalysed reaction is L-alanine(in) = L-alanine(out). The enzyme catalyses L-serine(in) = L-serine(out). It catalyses the reaction L-leucine(in) = L-leucine(out). In terms of biological role, facilitates bidirectional transport of amino acids. May act as a glutamate sensor that regulates glutamate-glutamine cycle and mTOR signaling in the brain. The transport mechanism remains to be elucidated. The polypeptide is Solute carrier family 38 member 10 (Rattus norvegicus (Rat)).